The sequence spans 507 residues: ATP synthase subunit alpha, chloroplastic (507 aa).

170–177 (GDRQTGKT) is an ATP binding site.

The protein belongs to the ATPase alpha/beta chains family. As to quaternary structure, F-type ATPases have 2 components, CF(1) - the catalytic core - and CF(0) - the membrane proton channel. CF(1) has five subunits: alpha(3), beta(3), gamma(1), delta(1), epsilon(1). CF(0) has four main subunits: a, b, b' and c.

Its subcellular location is the plastid. It is found in the chloroplast thylakoid membrane. It carries out the reaction ATP + H2O + 4 H(+)(in) = ADP + phosphate + 5 H(+)(out). Produces ATP from ADP in the presence of a proton gradient across the membrane. The alpha chain is a regulatory subunit. This Amborella trichopoda protein is ATP synthase subunit alpha, chloroplastic.